The primary structure comprises 363 residues: Phosphoribosylformylglycinamidine cyclo-ligase (363 aa).

The protein belongs to the AIR synthase family.

It localises to the cytoplasm. It catalyses the reaction 2-formamido-N(1)-(5-O-phospho-beta-D-ribosyl)acetamidine + ATP = 5-amino-1-(5-phospho-beta-D-ribosyl)imidazole + ADP + phosphate + H(+). It participates in purine metabolism; IMP biosynthesis via de novo pathway; 5-amino-1-(5-phospho-D-ribosyl)imidazole from N(2)-formyl-N(1)-(5-phospho-D-ribosyl)glycinamide: step 2/2. In Bartonella tribocorum (strain CIP 105476 / IBS 506), this protein is Phosphoribosylformylglycinamidine cyclo-ligase.